A 304-amino-acid polypeptide reads, in one-letter code: Lipoyl synthase (304 aa).

The disordered stretch occupies residues 1-21 (MAPELIQIDLEPRKPAPKPSW). [4Fe-4S] cluster is bound by residues Cys48, Cys53, Cys59, Cys74, Cys78, Cys81, and Ser287. Positions 60-276 (WNHKTATFML…KEEAMKMGFR (217 aa)) constitute a Radical SAM core domain.

Belongs to the radical SAM superfamily. Lipoyl synthase family. It depends on [4Fe-4S] cluster as a cofactor.

Its subcellular location is the cytoplasm. It catalyses the reaction [[Fe-S] cluster scaffold protein carrying a second [4Fe-4S](2+) cluster] + N(6)-octanoyl-L-lysyl-[protein] + 2 oxidized [2Fe-2S]-[ferredoxin] + 2 S-adenosyl-L-methionine + 4 H(+) = [[Fe-S] cluster scaffold protein] + N(6)-[(R)-dihydrolipoyl]-L-lysyl-[protein] + 4 Fe(3+) + 2 hydrogen sulfide + 2 5'-deoxyadenosine + 2 L-methionine + 2 reduced [2Fe-2S]-[ferredoxin]. It participates in protein modification; protein lipoylation via endogenous pathway; protein N(6)-(lipoyl)lysine from octanoyl-[acyl-carrier-protein]: step 2/2. Functionally, catalyzes the radical-mediated insertion of two sulfur atoms into the C-6 and C-8 positions of the octanoyl moiety bound to the lipoyl domains of lipoate-dependent enzymes, thereby converting the octanoylated domains into lipoylated derivatives. The sequence is that of Lipoyl synthase from Koribacter versatilis (strain Ellin345).